Consider the following 189-residue polypeptide: GTP cyclohydrolase 1 (189 aa).

Zn(2+) is bound by residues Cys-80, His-83, and Cys-152.

It belongs to the GTP cyclohydrolase I family. In terms of assembly, toroid-shaped homodecamer, composed of two pentamers of five dimers.

The catalysed reaction is GTP + H2O = 7,8-dihydroneopterin 3'-triphosphate + formate + H(+). It participates in cofactor biosynthesis; 7,8-dihydroneopterin triphosphate biosynthesis; 7,8-dihydroneopterin triphosphate from GTP: step 1/1. This chain is GTP cyclohydrolase 1, found in Latilactobacillus sakei subsp. sakei (strain 23K) (Lactobacillus sakei subsp. sakei).